Consider the following 384-residue polypeptide: Cysteine desulfurase (384 aa).

Pyridoxal 5'-phosphate contacts are provided by residues 74–75 (GT), N154, Q180, and 200–202 (SGH). Position 203 is an N6-(pyridoxal phosphate)lysine (K203). T238 is a binding site for pyridoxal 5'-phosphate. The active-site Cysteine persulfide intermediate is C325. C325 lines the [2Fe-2S] cluster pocket.

The protein belongs to the class-V pyridoxal-phosphate-dependent aminotransferase family. NifS/IscS subfamily. As to quaternary structure, homodimer. Requires pyridoxal 5'-phosphate as cofactor.

The catalysed reaction is (sulfur carrier)-H + L-cysteine = (sulfur carrier)-SH + L-alanine. Catalyzes the removal of elemental sulfur atoms from cysteine to produce alanine. Seems to participate in the biosynthesis of the nitrogenase metalloclusters by providing the inorganic sulfur required for the Fe-S core formation. The protein is Cysteine desulfurase of Rhodobacter capsulatus (Rhodopseudomonas capsulata).